The following is a 407-amino-acid chain: Serine/threonine transporter SstT (407 aa).

Helical transmembrane passes span Gly-12–Ser-32, Leu-42–Ile-62, Ile-81–Phe-101, Ala-141–Leu-161, Val-179–Ala-199, Ile-218–Phe-238, Phe-245–Ala-267, Ile-288–Leu-308, and Ile-330–Ile-350.

This sequence belongs to the dicarboxylate/amino acid:cation symporter (DAACS) (TC 2.A.23) family.

The protein resides in the cell inner membrane. The catalysed reaction is L-serine(in) + Na(+)(in) = L-serine(out) + Na(+)(out). It carries out the reaction L-threonine(in) + Na(+)(in) = L-threonine(out) + Na(+)(out). Its function is as follows. Involved in the import of serine and threonine into the cell, with the concomitant import of sodium (symport system). This is Serine/threonine transporter SstT from Campylobacter jejuni subsp. jejuni serotype O:2 (strain ATCC 700819 / NCTC 11168).